The sequence spans 424 residues: MASSNLIKQLQERGLVAQVTDEEALAERLAQGPIALYCGFDPTADSLHLGHLVPLLCLKRFQQAGHKPVALVGGATGLIGDPSFKAAERKLNTEETVQEWVDKIRKQVAPFLDFDCGENSAIAANNYDWFGNMNVLTFLRDIGKHFSVNQMINKEAVKQRLNREDEGMSITEFSYNLQQGYDWTCLNTHYYVELQIGGSDQRWNITSEIDLTRRLHQNHVLGLPDPLITNGDGTKFGKTEGGAVWLDPKKTSPYKFYQFWINTADADVYRFLKFFTFMSIEEINALEEEDKNSGKAPRAQYVLAEQVTRLVHGEEGLQAAKRITECLFSGSLSALSEADFEQLAQDGVPMVEMEKGADLMQALVDSELQPSRGQARKTIASNAITINGEKQSDPEYFFKEEDRLFGRFTLLRRGKKNYCLICWK.

Tyrosine 37 is a binding site for L-tyrosine. Residues 42 to 51 (PTADSLHLGH) carry the 'HIGH' region motif. At lysine 144 the chain carries N6-acetyllysine. L-tyrosine is bound by residues tyrosine 175 and glutamine 179. The 'KMSKS' region motif lies at 235 to 239 (KFGKT). Lysine 238 provides a ligand contact to ATP. The region spanning 357–414 (ADLMQALVDSELQPSRGQARKTIASNAITINGEKQSDPEYFFKEEDRLFGRFTLLRRG) is the S4 RNA-binding domain.

The protein belongs to the class-I aminoacyl-tRNA synthetase family. TyrS type 1 subfamily. As to quaternary structure, homodimer.

The protein resides in the cytoplasm. It carries out the reaction tRNA(Tyr) + L-tyrosine + ATP = L-tyrosyl-tRNA(Tyr) + AMP + diphosphate + H(+). Catalyzes the attachment of tyrosine to tRNA(Tyr) in a two-step reaction: tyrosine is first activated by ATP to form Tyr-AMP and then transferred to the acceptor end of tRNA(Tyr). This chain is Tyrosine--tRNA ligase, found in Shigella flexneri serotype 5b (strain 8401).